The following is a 418-amino-acid chain: FAD-dependent monooxygenase fmqB (418 aa).

FAD contacts are provided by Val-12 and Arg-68. Arg-147 is a catalytic residue. Positions 272 and 285 each coordinate FAD.

It belongs to the paxM FAD-dependent monooxygenase family.

The protein resides in the cytoplasm. Its pathway is alkaloid biosynthesis. FAD-dependent monooxygenase; part of the gene cluster that mediates the biosynthesis of the antitumor fumiquinazolines that confer a dual-usage capability to defend against phagocytes in the environment and animal hosts. The simplest member is fumiquinazoline F (FQF) with a 6-6-6 tricyclic core derived from anthranilic acid (Ant), tryptophan (Trp), and alanine (Ala). The trimodular NRPS fmqA is responsible for FQF formation. Modules 1, 2 and 3 of fmqA are predicted to activate and load Ant, Trp and Ala, respectively, providing for the assembly of an Ant-Trp-Ala-S-enzyme intermediate that would undergo double cyclization for chain release and generation of the tricyclic 6-6-6 product fumiquinazoline F. The presence of an E domain predicted for module 2 of fmqA is consistent with epimerization of L-Trp to D-Trp during assembly to generate the R-stereocenter at C14 of FQF. The FAD-dependent monooxygenase fmqB and the monomodular NRPS fmqC then maturate FQF to FQA. FmqB oxidizes the 2',3'-double bond of the indole side chain of FQF, and fmqC activates L-Ala as the adenylate, installs it as the pantetheinyl thioester on its carrier protein domain, and acylates the oxidized indole for subsequent intramolecular cyclization to create the 6-5-5-imidazolindolone of FQA. The FAD-linked oxidoreductase fmqD introduces a third layer of scaffold complexity by converting FQA to the spirohemiaminal FQC, presumably by catalyzing the formation of a transient imine within the pyrazinone ring. FQC subsequently converts nonenzymatically to the known cyclic aminal FQD. In Aspergillus fumigatus (strain ATCC MYA-4609 / CBS 101355 / FGSC A1100 / Af293) (Neosartorya fumigata), this protein is FAD-dependent monooxygenase fmqB.